Here is a 392-residue protein sequence, read N- to C-terminus: MIETRTDRMLLNFGPHHPSMHGVLRLLVTLDGENIVDCEPVIGYLHRGMEKIAENRTVVQYLPYVSRWDYGAGMFNEAITVNAVEKLAGISVPRRASYLRVIMLELTRITNHLLWFGPFLADLGAQTPFLYAMREREWILDLFEAVTGMRLINNNYFRVGGVAVDLPYGWTEKCLDFCEYFLPKVDEYERLVTDNPIFRRRLEGVGAISKQDAINWGLSGPMLRACGVNWDLRKVDHYECYDDFDWEVAVYPEGDCLARYRVRMKEMRESCKIVQQAVKALPGGPFENLEAKRMLEGPKSEWNKGDYQFISKKPSANFKIPKGEAYVRVESAKGELGIYIVGDDNVCPWRWKIRPPGFVNLQVLPQLIRGMKVADMIAILGSIDIIMGEVDR.

It belongs to the complex I 49 kDa subunit family. As to quaternary structure, NDH-1 can be composed of about 15 different subunits; different subcomplexes with different compositions have been identified which probably have different functions.

The protein resides in the cellular thylakoid membrane. It carries out the reaction a plastoquinone + NADH + (n+1) H(+)(in) = a plastoquinol + NAD(+) + n H(+)(out). The catalysed reaction is a plastoquinone + NADPH + (n+1) H(+)(in) = a plastoquinol + NADP(+) + n H(+)(out). In terms of biological role, NDH-1 shuttles electrons from an unknown electron donor, via FMN and iron-sulfur (Fe-S) centers, to quinones in the respiratory and/or the photosynthetic chain. The immediate electron acceptor for the enzyme in this species is believed to be plastoquinone. Couples the redox reaction to proton translocation, and thus conserves the redox energy in a proton gradient. Cyanobacterial NDH-1 also plays a role in inorganic carbon-concentration. The chain is NAD(P)H-quinone oxidoreductase subunit H from Synechococcus sp. (strain JA-2-3B'a(2-13)) (Cyanobacteria bacterium Yellowstone B-Prime).